A 260-amino-acid chain; its full sequence is 3-methyl-2-oxobutanoate hydroxymethyltransferase (260 aa).

The Mg(2+) site is built by Asp42 and Asp81. Residues 42–43 (DS), Asp81, and Lys109 each bind 3-methyl-2-oxobutanoate. Glu111 serves as a coordination point for Mg(2+). The active-site Proton acceptor is the Glu178.

Belongs to the PanB family. Homodecamer; pentamer of dimers. Mg(2+) serves as cofactor.

The protein resides in the cytoplasm. The enzyme catalyses 3-methyl-2-oxobutanoate + (6R)-5,10-methylene-5,6,7,8-tetrahydrofolate + H2O = 2-dehydropantoate + (6S)-5,6,7,8-tetrahydrofolate. Its pathway is cofactor biosynthesis; (R)-pantothenate biosynthesis; (R)-pantoate from 3-methyl-2-oxobutanoate: step 1/2. In terms of biological role, catalyzes the reversible reaction in which hydroxymethyl group from 5,10-methylenetetrahydrofolate is transferred onto alpha-ketoisovalerate to form ketopantoate. In Vesicomyosocius okutanii subsp. Calyptogena okutanii (strain HA), this protein is 3-methyl-2-oxobutanoate hydroxymethyltransferase.